Reading from the N-terminus, the 244-residue chain is SPX domain-containing protein 6 (244 aa).

An SPX domain is found at 1 to 147 (MKFGKLLKRQ…GGALAAPVAE (147 aa)). Residues 212-244 (GSSTHGRHSLPPLTLPDSDWLRSFQPPSPIPIQ) are disordered.

This is SPX domain-containing protein 6 (SPX6) from Oryza sativa subsp. indica (Rice).